A 380-amino-acid polypeptide reads, in one-letter code: Ankyrin repeat domain-containing protein 63 (380 aa).

ANK repeat units lie at residues 11 to 40, 46 to 79, 83 to 112, 116 to 145, and 153 to 182; these read AGTRTFLEAMQAGKVHLARFVLDALDRSII, QGRTPLMVAVGLPDPALRARFVRLLLEQGAAVNL, RGRTALSLACERGHLDAVQLLVQFSGDPEA, AGNSPVMWAAACGHGAVLEFLVRSFRRLGL, and AGLTALQLAAARGHGTCVQALTGPWGRAAA. 2 stretches are compositionally biased toward low complexity: residues 181–203 and 216–226; these read AAAAAARGSNSDSPPGRPAPAAS and RPLLARFARAA. Residues 181–256 form a disordered region; that stretch reads AAAAAARGSN…GSERPELGRS (76 aa). A Phosphoserine modification is found at S193. S294 carries the phosphoserine modification. The tract at residues 309-368 is disordered; sequence PIGLSPHPEGGPGSGRLGLRRRSTAPDIPSLVGEAPGPESGPELEANALSVSVPGPNPWQ.

The sequence is that of Ankyrin repeat domain-containing protein 63 from Homo sapiens (Human).